Reading from the N-terminus, the 619-residue chain is ATP-dependent RNA helicase abstrakt (619 aa).

A compositionally biased stretch (basic residues) spans M1–S11. Disordered regions lie at residues M1–V25 and E50–A69. Phosphoserine is present on residues S11, S13, S14, S56, S57, S58, and S66. Residues R177–V205 carry the Q motif motif. In terms of domain architecture, Helicase ATP-binding spans L208 to I392. A221–T228 is an ATP binding site. The DEAD box motif lies at D340–D343. The 161-residue stretch at N403–A563 folds into the Helicase C-terminal domain. A CCHC-type zinc finger spans residues H577–K594.

The protein belongs to the DEAD box helicase family. DDX41 subfamily.

It is found in the nucleus. It carries out the reaction ATP + H2O = ADP + phosphate + H(+). Functionally, ATP-dependent RNA helicase. Is essential for the directed and fasciculated early outgrowth of the bolwig nerves, as well as for its navigation at later stages. Is required during post-transcriptional gene expression. Plays a role during morphogenetic process, apoptosis and the establishment of cell polarity. This is ATP-dependent RNA helicase abstrakt (abs) from Drosophila melanogaster (Fruit fly).